Here is a 285-residue protein sequence, read N- to C-terminus: Ubiquinone biosynthesis protein COQ4, mitochondrial (285 aa).

Residues 1–11 constitute a mitochondrion transit peptide; it reads MPPTVRQGIRT. His-166, Asp-167, His-170, and Glu-182 together coordinate Zn(2+).

This sequence belongs to the COQ4 family. In terms of assembly, component of a multi-subunit COQ enzyme complex, composed of at least COQ3, COQ4, COQ5, COQ6, COQ7 and COQ9. Zn(2+) is required as a cofactor.

Its subcellular location is the mitochondrion inner membrane. The enzyme catalyses a 4-hydroxy-3-methoxy-5-(all-trans-polyprenyl)benzoate + H(+) = a 2-methoxy-6-(all-trans-polyprenyl)phenol + CO2. The protein operates within cofactor biosynthesis; ubiquinone biosynthesis. Its function is as follows. Lyase that catalyzes the C1-decarboxylation of 4-hydroxy-3-methoxy-5-(all-trans-polyprenyl)benzoic acid into 2-methoxy-6-(all-trans-polyprenyl)phenol during ubiquinone biosynthesis. The protein is Ubiquinone biosynthesis protein COQ4, mitochondrial of Paracoccidioides brasiliensis (strain Pb18).